A 362-amino-acid chain; its full sequence is Adenosine deaminase (362 aa).

Residues histidine 19 and histidine 21 each contribute to the Zn(2+) site. Positions 21, 23, and 181 each coordinate substrate. Residue histidine 208 coordinates Zn(2+). Glutamate 211 functions as the Proton donor in the catalytic mechanism. Zn(2+) is bound at residue aspartate 300.

It belongs to the metallo-dependent hydrolases superfamily. Adenosine and AMP deaminases family. Adenosine deaminase subfamily. Requires Zn(2+) as cofactor.

The catalysed reaction is adenosine + H2O + H(+) = inosine + NH4(+). It catalyses the reaction 2'-deoxyadenosine + H2O + H(+) = 2'-deoxyinosine + NH4(+). In terms of biological role, catalyzes the hydrolytic deamination of adenosine and 2-deoxyadenosine. This is Adenosine deaminase from Mycobacterium sp. (strain JLS).